The following is a 259-amino-acid chain: Peroxisomal membrane protein 11B (259 aa).

An N6-acetyllysine modification is found at lysine 43. The interval 157-176 (LKGSGGGVPGGSETGGLGGP) is disordered. A compositionally biased stretch (gly residues) spans 159-176 (GSGGGVPGGSETGGLGGP). The segment at 211–259 (VVRNACDLFIPLDKLGLWRCGPGIVGLCGLVSSILSILTLIYPWLRLKP) is interaction with PEX19, PEX11G and FIS1 and peroxisome targeting. Residues 233–255 (GIVGLCGLVSSILSILTLIYPWL) traverse the membrane as a helical segment.

This sequence belongs to the peroxin-11 family. As to quaternary structure, homodimer. Heterodimer with PEX11G. Interacts with PEX19. Interacts with FIS1.

It is found in the peroxisome membrane. Functionally, involved in peroxisomal proliferation. May regulate peroxisome division by recruiting the dynamin-related GTPase DNM1L to the peroxisomal membrane. Promotes membrane protrusion and elongation on the peroxisomal surface. The chain is Peroxisomal membrane protein 11B (PEX11B) from Homo sapiens (Human).